The primary structure comprises 226 residues: Small ribosomal subunit protein uS3 (226 aa).

The 69-residue stretch at 39–107 (IRKFIKNKLY…NILINITEIK (69 aa)) folds into the KH type-2 domain.

Belongs to the universal ribosomal protein uS3 family. As to quaternary structure, part of the 30S ribosomal subunit. Forms a tight complex with proteins S10 and S14.

In terms of biological role, binds the lower part of the 30S subunit head. Binds mRNA in the 70S ribosome, positioning it for translation. The protein is Small ribosomal subunit protein uS3 of Acetivibrio thermocellus (strain ATCC 27405 / DSM 1237 / JCM 9322 / NBRC 103400 / NCIMB 10682 / NRRL B-4536 / VPI 7372) (Clostridium thermocellum).